A 162-amino-acid polypeptide reads, in one-letter code: MNKTKVLYPGSFDPITNGHMDIIERSAKIFEEVNVAVVKNIQKKSTFTLEQRVEMIEKACKHLSNVKIHQFEGLTVDFAKQIGCSTIIRGLRAVSDFESEMQMSLANKKLNDELETLFLVADGKYAFLSSSIVREIASYGADISELVPENIVEDIKQRFNDK.

Residue S11 participates in substrate binding. ATP is bound by residues 11–12 and H19; that span reads SF. Positions 43, 75, and 89 each coordinate substrate. ATP contacts are provided by residues 90–92, E100, and 125–131; these read GLR and YAFLSSS.

This sequence belongs to the bacterial CoaD family. In terms of assembly, homohexamer. It depends on Mg(2+) as a cofactor.

It localises to the cytoplasm. It catalyses the reaction (R)-4'-phosphopantetheine + ATP + H(+) = 3'-dephospho-CoA + diphosphate. Its pathway is cofactor biosynthesis; coenzyme A biosynthesis; CoA from (R)-pantothenate: step 4/5. Reversibly transfers an adenylyl group from ATP to 4'-phosphopantetheine, yielding dephospho-CoA (dPCoA) and pyrophosphate. The chain is Phosphopantetheine adenylyltransferase from Finegoldia magna (strain ATCC 29328 / DSM 20472 / WAL 2508) (Peptostreptococcus magnus).